Consider the following 25-residue polypeptide: Caerin-2.5 (25 aa).

Expressed by the skin parotoid and/or rostral glands.

The protein localises to the secreted. Its function is as follows. Antibacterial peptide, that adopts an alpha helical conformation which can disrupt bacterial membranes. Each caerin displays a different antimicrobial specificity. This Ranoidea gilleni (Centralian tree frog) protein is Caerin-2.5.